The chain runs to 97 residues: YcgL domain-containing protein APP7_0754 (97 aa).

In terms of domain architecture, YcgL spans 6–90 (NLCAIYKSPK…PPENLLKTFL (85 aa)).

The protein is YcgL domain-containing protein APP7_0754 of Actinobacillus pleuropneumoniae serotype 7 (strain AP76).